The following is a 152-amino-acid chain: Xanthine-guanine phosphoribosyltransferase (152 aa).

5-phospho-alpha-D-ribose 1-diphosphate-binding positions include 37 to 38 (RG), Arg69, and 88 to 96 (DDLVDTGGT). Residue Arg69 coordinates GMP. Asp89 serves as a coordination point for Mg(2+). Guanine contacts are provided by Asp92 and Ile135. Residues Asp92 and Ile135 each coordinate xanthine. Residues 92–96 (DTGGT) and 134–135 (WI) contribute to the GMP site.

It belongs to the purine/pyrimidine phosphoribosyltransferase family. XGPT subfamily. In terms of assembly, homotetramer. Mg(2+) is required as a cofactor.

The protein resides in the cell inner membrane. It carries out the reaction GMP + diphosphate = guanine + 5-phospho-alpha-D-ribose 1-diphosphate. The enzyme catalyses XMP + diphosphate = xanthine + 5-phospho-alpha-D-ribose 1-diphosphate. It catalyses the reaction IMP + diphosphate = hypoxanthine + 5-phospho-alpha-D-ribose 1-diphosphate. It functions in the pathway purine metabolism; GMP biosynthesis via salvage pathway; GMP from guanine: step 1/1. Its pathway is purine metabolism; XMP biosynthesis via salvage pathway; XMP from xanthine: step 1/1. Functionally, purine salvage pathway enzyme that catalyzes the transfer of the ribosyl-5-phosphate group from 5-phospho-alpha-D-ribose 1-diphosphate (PRPP) to the N9 position of the 6-oxopurines guanine and xanthine to form the corresponding ribonucleotides GMP (guanosine 5'-monophosphate) and XMP (xanthosine 5'-monophosphate), with the release of PPi. To a lesser extent, also acts on hypoxanthine. The chain is Xanthine-guanine phosphoribosyltransferase from Pectobacterium carotovorum subsp. carotovorum (strain PC1).